A 382-amino-acid chain; its full sequence is 3-phytase (382 aa).

Residues 1–26 (MKVPKTMLLSTAAGLLLSLTATSVSA) form the signal peptide. Residues 27-361 (HYVNEEHHFK…VSWEQIAQHL (335 aa)) form the BPP domain.

The protein localises to the secreted. It catalyses the reaction 1D-myo-inositol hexakisphosphate + H2O = 1D-myo-inositol 1,2,4,5,6-pentakisphosphate + phosphate. In Bacillus subtilis (strain 168), this protein is 3-phytase (phy).